The primary structure comprises 34 residues: Photosystem II reaction center protein M (34 aa).

Residues 5-25 traverse the membrane as a helical segment; it reads ILGLIATTLFILIPTSFLLIL.

Belongs to the PsbM family. As to quaternary structure, PSII is composed of 1 copy each of membrane proteins PsbA, PsbB, PsbC, PsbD, PsbE, PsbF, PsbH, PsbI, PsbJ, PsbK, PsbL, PsbM, PsbT, PsbX, PsbY, PsbZ, Psb30/Ycf12, at least 3 peripheral proteins of the oxygen-evolving complex and a large number of cofactors. It forms dimeric complexes.

It is found in the plastid. The protein resides in the chloroplast thylakoid membrane. Its function is as follows. One of the components of the core complex of photosystem II (PSII). PSII is a light-driven water:plastoquinone oxidoreductase that uses light energy to abstract electrons from H(2)O, generating O(2) and a proton gradient subsequently used for ATP formation. It consists of a core antenna complex that captures photons, and an electron transfer chain that converts photonic excitation into a charge separation. This subunit is found at the monomer-monomer interface. The sequence is that of Photosystem II reaction center protein M from Pleurastrum terricola (Filamentous green alga).